The following is a 407-amino-acid chain: O-methyltransferase verK (407 aa).

Residues glutamate 263 and glycine 295–phenylalanine 297 each bind S-adenosyl-L-methionine. The Proton acceptor role is filled by histidine 314.

This sequence belongs to the class I-like SAM-binding methyltransferase superfamily. Cation-independent O-methyltransferase family.

Its pathway is mycotoxin biosynthesis. Its function is as follows. O-methyltransferase; part of the gene cluster that mediates the biosynthesis of 11'-deoxyverticillin A, one of the dimeric epipolythiodioxopiperazines (ETPs) from the verticillin family that act as mycotoxins. 11'-deoxyverticillin A is required for normal conidiation. The nonribosomal peptide synthetase verP is speculated to be responsible for condensation of amino acids to form the carbon skeleton of verticillin, whereas the cluster-specific tailoring enzymes are involved in further modifications leading to the production of 11'-deoxyverticillin A. This chain is O-methyltransferase verK, found in Clonostachys rogersoniana.